Here is a 266-residue protein sequence, read N- to C-terminus: Glutathione S-transferase AN1595 (266 aa).

The GST N-terminal domain maps to 43–123 (SFGKLYTYKR…HVTNEDSTTT (81 aa)). K93, E107, C108, and N143 together coordinate glutathione. Substrate is bound at residue K93. A GST C-terminal domain is found at 128–259 (SSLDFVQIIR…VEEGLPNAPP (132 aa)).

It belongs to the GST superfamily.

Its pathway is secondary metabolite biosynthesis; terpenoid biosynthesis. Its function is as follows. Glutathione S-transferase; part of the gene cluster that mediates the biosynthesis of the diterpene ent-pimara-8(14),15-diene (PD). Within the cluster, the HMG-CoA reductase AN1593 functions in the mevalonate pathway, which produces isoprenoid precursors. The geranylgeranyl pyrophosphate (GGPP) synthase AN1592 is needed in the formation of GGPP, the precursor for diterpenes. Lastly, the pimaradiene synthase pbcA performs the 2 cyclization steps that convert GGPP to ent-pimara-8(14),15-diene. The putative roles of the remaining cluster enzymes in ent-pimara-8(14),15-diene biosynthesis is unclear. The cytochrome P450 monooxygenase AN1598, the glutathione S-transferase AN1595, the oxidoreductases AN1596 and AN1597 probably function as decorative enzymes. It is possible that in biological conditions the compound is oxidized to ent-pimara-8(14),15-dien-19-oic acid, which is a bioactive diterpene compound predominant in many plant extracts. This chain is Glutathione S-transferase AN1595, found in Emericella nidulans (strain FGSC A4 / ATCC 38163 / CBS 112.46 / NRRL 194 / M139) (Aspergillus nidulans).